We begin with the raw amino-acid sequence, 234 residues long: Small ribosomal subunit protein uS2 (234 aa).

It belongs to the universal ribosomal protein uS2 family.

The polypeptide is Small ribosomal subunit protein uS2 (Clostridium kluyveri (strain NBRC 12016)).